The following is a 114-amino-acid chain: Hydrogenase maturation factor HypA (114 aa).

His2 is a binding site for Ni(2+). Residues Cys73, Cys76, Cys90, and Cys93 each coordinate Zn(2+).

This sequence belongs to the HypA/HybF family.

Functionally, involved in the maturation of [NiFe] hydrogenases. Required for nickel insertion into the metal center of the hydrogenase. The chain is Hydrogenase maturation factor HypA from Klebsiella pneumoniae (strain 342).